The primary structure comprises 2335 residues: Histone-lysine N-methyltransferase ATXR3 (2335 aa).

4 disordered regions span residues 30 to 142 (NESK…FKDE), 332 to 355 (STGN…SYAD), 371 to 556 (CSRS…SSSK), and 902 to 961 (DQVP…KTDT). 2 stretches are compositionally biased toward polar residues: residues 31–46 (ESKT…TSIA) and 53–62 (QPANKPSASS). A compositionally biased stretch (basic residues) spans 65–84 (VKKKRIVKVIRKVVKRRPKQ). A Nuclear localization signal 1 motif is present at residues 67–74 (KKRIVKVI). Polar residues predominate over residues 97-112 (PPSQVVQLPAESQLQI). Composition is skewed to basic and acidic residues over residues 340–353 (HGAE…KHSY), 371–390 (CSRS…RLYR), and 430–452 (WSPH…RERS). The span at 461–475 (HARKRSPRDRRHHDY) shows a compositional bias: basic residues. 3 stretches are compositionally biased toward basic and acidic residues: residues 485–498 (SPHD…RRDY), 507–548 (QSDR…ESNG), and 910–921 (PRAKVRSKERCP). The Nuclear localization signal 2 motif lies at 527–534 (ERRDCQTG). Residues 922-932 (SRPARPSPASS) show a composition bias toward low complexity. Over residues 941–961 (SHSQSTASTGQDSQGLWKTDT) the composition is skewed to polar residues. The Nuclear localization signal 3 motif lies at 1382–1389 (ARRSSAIL). The interval 1532 to 1572 (NRKSFSSESDTSSELSDNGKSDNYSSASASESESDIRSEGR) is disordered. A compositionally biased stretch (low complexity) spans 1535–1547 (SFSSESDTSSELS). Residues 1765–1904 (KEIESRSDDK…YGEEITFDYN (140 aa)) enclose the SET domain. Zn(2+) is bound at residue C1868. Y1903 is an S-adenosyl-L-methionine binding site. In terms of domain architecture, Post-SET spans 1914-1930 (EASVCLCGSQVCRGSYL). The Zn(2+) site is built by C1918, C1920, and C1925.

Belongs to the class V-like SAM-binding methyltransferase superfamily. Histone-lysine methyltransferase family. TRX/MLL subfamily. In terms of tissue distribution, expressed in roots, leaves, stems and inflorescences.

It localises to the nucleus. It carries out the reaction L-lysyl(4)-[histone H3] + 3 S-adenosyl-L-methionine = N(6),N(6),N(6)-trimethyl-L-lysyl(4)-[histone H3] + 3 S-adenosyl-L-homocysteine + 3 H(+). Histone methyltransferase specifically required for trimethylation of 'Lys-4' of histone H3 (H3K4me3) and is crucial for both sporophyte and gametophyte development. Function as a diurnal 'writer' to counteract the nocturne 'eraser' demethylase activity of JMJ14 thus orchestrating the circadian rhythm of histone modifications (e.g. H3K4me3) and modulating the rhythmic expression of diurnal target genes; this mechanism relies also on the circadian clock oscillators CCA1 and LHY. This chain is Histone-lysine N-methyltransferase ATXR3, found in Arabidopsis thaliana (Mouse-ear cress).